A 473-amino-acid chain; its full sequence is Aspartyl/glutamyl-tRNA(Asn/Gln) amidotransferase subunit B (473 aa).

This sequence belongs to the GatB/GatE family. GatB subfamily. As to quaternary structure, heterotrimer of A, B and C subunits.

The enzyme catalyses L-glutamyl-tRNA(Gln) + L-glutamine + ATP + H2O = L-glutaminyl-tRNA(Gln) + L-glutamate + ADP + phosphate + H(+). The catalysed reaction is L-aspartyl-tRNA(Asn) + L-glutamine + ATP + H2O = L-asparaginyl-tRNA(Asn) + L-glutamate + ADP + phosphate + 2 H(+). In terms of biological role, allows the formation of correctly charged Asn-tRNA(Asn) or Gln-tRNA(Gln) through the transamidation of misacylated Asp-tRNA(Asn) or Glu-tRNA(Gln) in organisms which lack either or both of asparaginyl-tRNA or glutaminyl-tRNA synthetases. The reaction takes place in the presence of glutamine and ATP through an activated phospho-Asp-tRNA(Asn) or phospho-Glu-tRNA(Gln). The sequence is that of Aspartyl/glutamyl-tRNA(Asn/Gln) amidotransferase subunit B from Francisella tularensis subsp. tularensis (strain FSC 198).